Consider the following 95-residue polypeptide: Defensin-A3 (95 aa).

The N-terminal stretch at 1–19 (MRTLGLLLALLFLAAQTPA) is a signal peptide. Residues 20 to 61 (QLMGEEAEEATGRPEATEAQEAAAALMAARAADRHVTDPEQQ) constitute a propeptide that is removed on maturation. Cystine bridges form between Cys-66-Cys-93, Cys-68-Cys-82, and Cys-72-Cys-92.

Belongs to the alpha-defensin family. Highly expressed in spleen, and expressed at lower levels in intestin and lung.

Its subcellular location is the secreted. Functionally, has antimicrobial activity. In Ornithorhynchus anatinus (Duckbill platypus), this protein is Defensin-A3.